Here is a 203-residue protein sequence, read N- to C-terminus: 3-isopropylmalate dehydratase small subunit (203 aa).

Belongs to the LeuD family. LeuD type 1 subfamily. Heterodimer of LeuC and LeuD.

The enzyme catalyses (2R,3S)-3-isopropylmalate = (2S)-2-isopropylmalate. It participates in amino-acid biosynthesis; L-leucine biosynthesis; L-leucine from 3-methyl-2-oxobutanoate: step 2/4. Catalyzes the isomerization between 2-isopropylmalate and 3-isopropylmalate, via the formation of 2-isopropylmaleate. In Rhodospirillum centenum (strain ATCC 51521 / SW), this protein is 3-isopropylmalate dehydratase small subunit.